The following is a 446-amino-acid chain: Choline monooxygenase, chloroplastic (446 aa).

The transit peptide at 1–65 directs the protein to the chloroplast; the sequence is MAASATTMLL…NTSTNKIITK (65 aa). Residues 127–234 form the Rieske domain; sequence WQVAGYSEQV…VAEWGPFILI (108 aa). Cysteine 169, histidine 171, cysteine 188, and histidine 191 together coordinate [2Fe-2S] cluster. The Fe cation site is built by histidine 294 and histidine 299.

The protein belongs to the choline monooxygenase family. It depends on [2Fe-2S] cluster as a cofactor. The cofactor is Fe cation. Mg(2+) is required as a cofactor. As to expression, expressed in roots and leaves.

It is found in the plastid. The protein resides in the chloroplast stroma. The catalysed reaction is choline + 2 reduced [2Fe-2S]-[ferredoxin] + O2 + 2 H(+) = betaine aldehyde hydrate + 2 oxidized [2Fe-2S]-[ferredoxin] + H2O. Its pathway is amine and polyamine biosynthesis; betaine biosynthesis via choline pathway; betaine aldehyde from choline (monooxygenase route): step 1/1. Functionally, catalyzes the first step of the osmoprotectant glycine betaine synthesis. In Beta vulgaris (Sugar beet), this protein is Choline monooxygenase, chloroplastic (CMO).